The following is a 308-amino-acid chain: Methionyl-tRNA formyltransferase (308 aa).

111-114 (SLLP) contributes to the (6S)-5,6,7,8-tetrahydrofolate binding site.

Belongs to the Fmt family.

It catalyses the reaction L-methionyl-tRNA(fMet) + (6R)-10-formyltetrahydrofolate = N-formyl-L-methionyl-tRNA(fMet) + (6S)-5,6,7,8-tetrahydrofolate + H(+). Attaches a formyl group to the free amino group of methionyl-tRNA(fMet). The formyl group appears to play a dual role in the initiator identity of N-formylmethionyl-tRNA by promoting its recognition by IF2 and preventing the misappropriation of this tRNA by the elongation apparatus. This is Methionyl-tRNA formyltransferase from Thermodesulfovibrio yellowstonii (strain ATCC 51303 / DSM 11347 / YP87).